Reading from the N-terminus, the 363-residue chain is Carbamoyl phosphate synthase small chain (363 aa).

The CPSase stretch occupies residues 1 to 173; it reads MMKAFLVLDN…SKYIFGTHTG (173 aa). The L-glutamine site is built by S46, G225, and G227. Residues 177–363 enclose the Glutamine amidotransferase type-1 domain; that stretch reads KLAVYDYGVK…YDLVEKTKKG (187 aa). C253 (nucleophile) is an active-site residue. L-glutamine-binding residues include L254, Q257, N295, G297, and F298. Residues H336 and E338 contribute to the active site.

This sequence belongs to the CarA family. In terms of assembly, composed of two chains; the small (or glutamine) chain promotes the hydrolysis of glutamine to ammonia, which is used by the large (or ammonia) chain to synthesize carbamoyl phosphate. Tetramer of heterodimers (alpha,beta)4.

The enzyme catalyses hydrogencarbonate + L-glutamine + 2 ATP + H2O = carbamoyl phosphate + L-glutamate + 2 ADP + phosphate + 2 H(+). The catalysed reaction is L-glutamine + H2O = L-glutamate + NH4(+). Its pathway is amino-acid biosynthesis; L-arginine biosynthesis; carbamoyl phosphate from bicarbonate: step 1/1. It participates in pyrimidine metabolism; UMP biosynthesis via de novo pathway; (S)-dihydroorotate from bicarbonate: step 1/3. Small subunit of the glutamine-dependent carbamoyl phosphate synthetase (CPSase). CPSase catalyzes the formation of carbamoyl phosphate from the ammonia moiety of glutamine, carbonate, and phosphate donated by ATP, constituting the first step of 2 biosynthetic pathways, one leading to arginine and/or urea and the other to pyrimidine nucleotides. The small subunit (glutamine amidotransferase) binds and cleaves glutamine to supply the large subunit with the substrate ammonia. This is Carbamoyl phosphate synthase small chain from Leptospira interrogans serogroup Icterohaemorrhagiae serovar copenhageni (strain Fiocruz L1-130).